A 494-amino-acid polypeptide reads, in one-letter code: 4-trimethylaminobutyraldehyde dehydrogenase (494 aa).

Position 2 is an N-acetylserine (serine 2). The residue at position 30 (lysine 30) is an N6-acetyllysine; alternate. Lysine 30 bears the N6-succinyllysine; alternate mark. At lysine 59 the chain carries N6-succinyllysine. NAD(+) is bound by residues lysine 180 and 232-236 (GSVPT). The active-site Proton acceptor is glutamate 254. Cysteine 288 functions as the Nucleophile in the catalytic mechanism. The residue at position 298 (lysine 298) is an N6-acetyllysine. Lysine 303 carries the N6-acetyllysine; alternate modification. Lysine 303 carries the N6-succinyllysine; alternate modification. Lysine 344 carries the post-translational modification N6-acetyllysine. Position 391 (glutamate 391) interacts with NAD(+).

Belongs to the aldehyde dehydrogenase family. Homotetramer.

The protein resides in the cytoplasm. The protein localises to the cytosol. The enzyme catalyses 4-(trimethylamino)butanal + NAD(+) + H2O = 4-(trimethylamino)butanoate + NADH + 2 H(+). It carries out the reaction an aldehyde + NAD(+) + H2O = a carboxylate + NADH + 2 H(+). It catalyses the reaction 4-aminobutanal + NAD(+) + H2O = 4-aminobutanoate + NADH + 2 H(+). The catalysed reaction is formaldehyde + NAD(+) + H2O = formate + NADH + 2 H(+). The enzyme catalyses acetaldehyde + NAD(+) + H2O = acetate + NADH + 2 H(+). It carries out the reaction imidazole-4-acetaldehyde + NAD(+) + H2O = imidazole-4-acetate + NADH + 2 H(+). It catalyses the reaction acrolein + NAD(+) + H2O = acrylate + NADH + 2 H(+). The catalysed reaction is (5-hydroxyindol-3-yl)acetaldehyde + NAD(+) + H2O = (5-hydroxyindol-3-yl)acetate + NADH + 2 H(+). The enzyme catalyses 3,4-dihydroxyphenylacetaldehyde + NAD(+) + H2O = 3,4-dihydroxyphenylacetate + NADH + 2 H(+). It carries out the reaction spermine monoaldehyde + NAD(+) + H2O = N-(2-carboxyethyl)spermidine + NADH + 2 H(+). It catalyses the reaction propanal + NAD(+) + H2O = propanoate + NADH + 2 H(+). The catalysed reaction is butanal + NAD(+) + H2O = butanoate + NADH + 2 H(+). The enzyme catalyses pentanal + NAD(+) + H2O = pentanoate + NADH + 2 H(+). It carries out the reaction hexanal + NAD(+) + H2O = hexanoate + NADH + 2 H(+). It functions in the pathway amine and polyamine biosynthesis; carnitine biosynthesis. In terms of biological role, converts gamma-trimethylaminobutyraldehyde into gamma-butyrobetaine with high efficiency (in vitro). Can catalyze the irreversible oxidation of a broad range of aldehydes to the corresponding acids in an NAD-dependent reaction, but with low efficiency. Catalyzes the oxidation of aldehydes arising from biogenic amines and polyamines. The chain is 4-trimethylaminobutyraldehyde dehydrogenase (ALDH9A1) from Sus scrofa (Pig).